A 325-amino-acid polypeptide reads, in one-letter code: UDP-N-acetylenolpyruvoylglucosamine reductase (325 aa).

Residues 40–221 (RTGGLAELFY…RAAMDEVALH (182 aa)) enclose the FAD-binding PCMH-type domain. R186 is an active-site residue. The Proton donor role is filled by S235. E305 is an active-site residue.

It belongs to the MurB family. It depends on FAD as a cofactor.

Its subcellular location is the cytoplasm. It carries out the reaction UDP-N-acetyl-alpha-D-muramate + NADP(+) = UDP-N-acetyl-3-O-(1-carboxyvinyl)-alpha-D-glucosamine + NADPH + H(+). The protein operates within cell wall biogenesis; peptidoglycan biosynthesis. Its function is as follows. Cell wall formation. The sequence is that of UDP-N-acetylenolpyruvoylglucosamine reductase from Bartonella henselae (strain ATCC 49882 / DSM 28221 / CCUG 30454 / Houston 1) (Rochalimaea henselae).